A 223-amino-acid polypeptide reads, in one-letter code: MPIEDRDDAHVITHALAKHTLSELRSDETDQVAFRNGLVELGRLCGYEIIDGMMDTEYVSITTPLAETTGEVVKGLDDVVIVNVLRAATPFVEGLVEAFPHARQGVISAGRDEAAGMNEDGEFPITVDYVKLPDIDADDTVIVADPILATGSTMVAVLEEVLEQGTPERLVVLSAVSAPPGLARVNDSIPSADVLTVSVDERLDEDGYIVPGVGDAGDRAFGT.

5-phospho-alpha-D-ribose 1-diphosphate contacts are provided by residues arginine 86, arginine 111, and 145–153 (DPILATGST). Residues isoleucine 209 and 214–216 (GDA) contribute to the uracil site. Aspartate 215 lines the 5-phospho-alpha-D-ribose 1-diphosphate pocket.

The protein belongs to the UPRTase family. Mg(2+) serves as cofactor.

It catalyses the reaction UMP + diphosphate = 5-phospho-alpha-D-ribose 1-diphosphate + uracil. Its pathway is pyrimidine metabolism; UMP biosynthesis via salvage pathway; UMP from uracil: step 1/1. Its activity is regulated as follows. Allosterically activated by GTP. In terms of biological role, catalyzes the conversion of uracil and 5-phospho-alpha-D-ribose 1-diphosphate (PRPP) to UMP and diphosphate. This is Uracil phosphoribosyltransferase from Natronomonas pharaonis (strain ATCC 35678 / DSM 2160 / CIP 103997 / JCM 8858 / NBRC 14720 / NCIMB 2260 / Gabara) (Halobacterium pharaonis).